Consider the following 316-residue polypeptide: 4-hydroxy-3-methylbut-2-enyl diphosphate reductase (316 aa).

Position 12 (Cys-12) interacts with [4Fe-4S] cluster. His-41 and His-74 together coordinate (2E)-4-hydroxy-3-methylbut-2-enyl diphosphate. Residues His-41 and His-74 each coordinate dimethylallyl diphosphate. His-41 and His-74 together coordinate isopentenyl diphosphate. [4Fe-4S] cluster is bound at residue Cys-96. Position 124 (His-124) interacts with (2E)-4-hydroxy-3-methylbut-2-enyl diphosphate. Residue His-124 participates in dimethylallyl diphosphate binding. His-124 contributes to the isopentenyl diphosphate binding site. Glu-126 (proton donor) is an active-site residue. Thr-167 is a binding site for (2E)-4-hydroxy-3-methylbut-2-enyl diphosphate. Residue Cys-197 participates in [4Fe-4S] cluster binding. 4 residues coordinate (2E)-4-hydroxy-3-methylbut-2-enyl diphosphate: Ser-225, Ser-226, Asn-227, and Ser-269. Ser-225, Ser-226, Asn-227, and Ser-269 together coordinate dimethylallyl diphosphate. Positions 225, 226, 227, and 269 each coordinate isopentenyl diphosphate.

This sequence belongs to the IspH family. In terms of assembly, homodimer. The cofactor is [4Fe-4S] cluster.

It catalyses the reaction isopentenyl diphosphate + 2 oxidized [2Fe-2S]-[ferredoxin] + H2O = (2E)-4-hydroxy-3-methylbut-2-enyl diphosphate + 2 reduced [2Fe-2S]-[ferredoxin] + 2 H(+). The enzyme catalyses dimethylallyl diphosphate + 2 oxidized [2Fe-2S]-[ferredoxin] + H2O = (2E)-4-hydroxy-3-methylbut-2-enyl diphosphate + 2 reduced [2Fe-2S]-[ferredoxin] + 2 H(+). It participates in isoprenoid biosynthesis; dimethylallyl diphosphate biosynthesis; dimethylallyl diphosphate from (2E)-4-hydroxy-3-methylbutenyl diphosphate: step 1/1. It functions in the pathway isoprenoid biosynthesis; isopentenyl diphosphate biosynthesis via DXP pathway; isopentenyl diphosphate from 1-deoxy-D-xylulose 5-phosphate: step 6/6. Its function is as follows. Catalyzes the conversion of 1-hydroxy-2-methyl-2-(E)-butenyl 4-diphosphate (HMBPP) into a mixture of isopentenyl diphosphate (IPP) and dimethylallyl diphosphate (DMAPP). Acts in the terminal step of the DOXP/MEP pathway for isoprenoid precursor biosynthesis. The polypeptide is 4-hydroxy-3-methylbut-2-enyl diphosphate reductase (Pectobacterium atrosepticum (strain SCRI 1043 / ATCC BAA-672) (Erwinia carotovora subsp. atroseptica)).